The following is a 339-amino-acid chain: 2-deoxy-scyllo-inosamine dehydrogenase (339 aa).

Residues C37, H59, C88, C91, C94, C102, and E143 each coordinate Zn(2+).

Belongs to the zinc-containing alcohol dehydrogenase family. DOIA dehydrogenase subfamily. Zn(2+) serves as cofactor.

It carries out the reaction 2-deoxy-scyllo-inosamine + NADP(+) = 3-amino-2,3-dideoxy-scyllo-inosose + NADPH + H(+). The catalysed reaction is 2-deoxy-scyllo-inosamine + NAD(+) = 3-amino-2,3-dideoxy-scyllo-inosose + NADH + H(+). Its pathway is metabolic intermediate biosynthesis; 2-deoxystreptamine biosynthesis; 2-deoxystreptamine from D-glucose 6-phosphate: step 3/4. It functions in the pathway antibiotic biosynthesis; paromomycin biosynthesis. Functionally, catalyzes the oxidation of 2-deoxy-scyllo-inosamine (DOIA) with NAD(+) or NADP(+), forming 3-amino-2,3-dideoxy-scyllo-inosose (amino-DOI). The sequence is that of 2-deoxy-scyllo-inosamine dehydrogenase (parE) from Streptomyces paromomycinus (Streptomyces rimosus subsp. paromomycinus).